The sequence spans 180 residues: Shikimate kinase (180 aa).

14-19 (GAGKSC) contacts ATP. Residue Ser-18 participates in Mg(2+) binding. The substrate site is built by Asp-36, Arg-60, and Gly-82. ATP is bound at residue Arg-120. Arg-139 is a substrate binding site.

It belongs to the shikimate kinase family. Monomer. Mg(2+) is required as a cofactor.

It localises to the cytoplasm. It catalyses the reaction shikimate + ATP = 3-phosphoshikimate + ADP + H(+). The protein operates within metabolic intermediate biosynthesis; chorismate biosynthesis; chorismate from D-erythrose 4-phosphate and phosphoenolpyruvate: step 5/7. Functionally, catalyzes the specific phosphorylation of the 3-hydroxyl group of shikimic acid using ATP as a cosubstrate. This chain is Shikimate kinase, found in Xanthomonas oryzae pv. oryzae (strain PXO99A).